Here is a 660-residue protein sequence, read N- to C-terminus: MTFVIADRYELGASIGSGGMSEVFAATDLLIGREVAVKMLRTDLAKDVNFRERFRREAQNAGKLSHPSIVAVFDTGEVDRDGISVPYIVMERVHGRDLRDIVREDGPYSPSQAATIMIPVCHALQSSHEAGIIHRDVKPANIMINNTGGVKVMDFGIARALDDSTSAMTQTAAVIGTAQYLSPEQARGKPADARSDVYAAGCVLYELVTGRPPFEGESPFAVAYQHVQEEPTPPSEYISDLSPTAALNVDAVVLTAMAKHPADRYQTAAEMAADLELLSRNAVSRAARAHVEKPDEPETVVVPQRLSTPPPPPTPAMPAATVAAPAAAPTAVGSRPAAARQPKRGSRALTVLAIVLTLGVIGVGGAFTYDFLSNSSSASTQQIPNIVGLPENEAVLELERLGFTVVLTTEPSPDVAEGLVIRTSPNVGSEIREGATVTLTISSGREVVTIPDVTGLTLAEATREIEGAGLVLDQSIREENSDDYPAGTVIQQNPRAGGETSVGASITLTVSTGPSLVRVPVITGMQWSQAESNITSLGLVPDIYYVDSLLPEGQVISASGQGTELPRGSTVTVEISNGMLIEAPDLARLDVDNALKALRDAGWTAPDTSLIEGAPIPTGALVDQGRIGFQDPSPGQPLRKDAVVNIRLYRFDLTALVPEP.

The Protein kinase domain maps to 9 to 278 (YELGASIGSG…AEMAADLELL (270 aa)). Residues 15–23 (IGSGGMSEV) and Lys38 each bind ATP. The active-site Proton acceptor is the Asp136. The segment at 288–319 (RAHVEKPDEPETVVVPQRLSTPPPPPTPAMPA) is disordered. 3 consecutive PASTA domains span residues 377–443 (SAST…TISS), 444–512 (GREV…TVST), and 513–577 (GPSL…EISN).

It belongs to the protein kinase superfamily. Ser/Thr protein kinase family.

It catalyses the reaction L-seryl-[protein] + ATP = O-phospho-L-seryl-[protein] + ADP + H(+). The enzyme catalyses L-threonyl-[protein] + ATP = O-phospho-L-threonyl-[protein] + ADP + H(+). This is Probable serine/threonine-protein kinase CE0033 from Corynebacterium efficiens (strain DSM 44549 / YS-314 / AJ 12310 / JCM 11189 / NBRC 100395).